The following is a 188-amino-acid chain: Photosystem I assembly protein Ycf4 (188 aa).

The next 2 helical transmembrane spans lie at 26 to 46 (YFWA…GLSS) and 68 to 88 (LVMG…WFVI).

It belongs to the Ycf4 family.

Its subcellular location is the cellular thylakoid membrane. Its function is as follows. Seems to be required for the assembly of the photosystem I complex. This is Photosystem I assembly protein Ycf4 from Synechococcus sp. (strain ATCC 27144 / PCC 6301 / SAUG 1402/1) (Anacystis nidulans).